A 230-amino-acid polypeptide reads, in one-letter code: Large ribosomal subunit protein uL1 (230 aa).

The protein belongs to the universal ribosomal protein uL1 family. Part of the 50S ribosomal subunit.

In terms of biological role, binds directly to 23S rRNA. The L1 stalk is quite mobile in the ribosome, and is involved in E site tRNA release. Its function is as follows. Protein L1 is also a translational repressor protein, it controls the translation of the L11 operon by binding to its mRNA. The protein is Large ribosomal subunit protein uL1 of Rhodopseudomonas palustris (strain BisA53).